The sequence spans 321 residues: Degreening-related gene dee76 protein (321 aa).

This sequence belongs to the Mo25 family.

This is Degreening-related gene dee76 protein (DEE76) from Auxenochlorella protothecoides (Green microalga).